A 459-amino-acid chain; its full sequence is Bifunctional protein GlmU (459 aa).

The tract at residues 1–229 (MSNFAIILAA…FDESLGVNDR (229 aa)) is pyrophosphorylase. UDP-N-acetyl-alpha-D-glucosamine contacts are provided by residues 8 to 11 (LAAG), Lys-22, Gln-72, and 77 to 78 (GT). Asp-102 provides a ligand contact to Mg(2+). Residues Gly-139, Glu-154, Asn-169, and Asn-227 each contribute to the UDP-N-acetyl-alpha-D-glucosamine site. Asn-227 is a Mg(2+) binding site. Residues 230–250 (VALATAESVMRRRINHKHMVN) form a linker region. The segment at 251–459 (GVSFVNPEAT…TRLPHHPKNQ (209 aa)) is N-acetyltransferase. UDP-N-acetyl-alpha-D-glucosamine is bound by residues Arg-332 and Lys-350. The active-site Proton acceptor is His-362. 2 residues coordinate UDP-N-acetyl-alpha-D-glucosamine: Tyr-365 and Asn-376. Residues Ala-379, 385-386 (NY), Ser-404, Ala-422, and Arg-439 each bind acetyl-CoA.

The protein in the N-terminal section; belongs to the N-acetylglucosamine-1-phosphate uridyltransferase family. This sequence in the C-terminal section; belongs to the transferase hexapeptide repeat family. In terms of assembly, homotrimer. Requires Mg(2+) as cofactor.

It is found in the cytoplasm. The enzyme catalyses alpha-D-glucosamine 1-phosphate + acetyl-CoA = N-acetyl-alpha-D-glucosamine 1-phosphate + CoA + H(+). The catalysed reaction is N-acetyl-alpha-D-glucosamine 1-phosphate + UTP + H(+) = UDP-N-acetyl-alpha-D-glucosamine + diphosphate. The protein operates within nucleotide-sugar biosynthesis; UDP-N-acetyl-alpha-D-glucosamine biosynthesis; N-acetyl-alpha-D-glucosamine 1-phosphate from alpha-D-glucosamine 6-phosphate (route II): step 2/2. It participates in nucleotide-sugar biosynthesis; UDP-N-acetyl-alpha-D-glucosamine biosynthesis; UDP-N-acetyl-alpha-D-glucosamine from N-acetyl-alpha-D-glucosamine 1-phosphate: step 1/1. It functions in the pathway bacterial outer membrane biogenesis; LPS lipid A biosynthesis. In terms of biological role, catalyzes the last two sequential reactions in the de novo biosynthetic pathway for UDP-N-acetylglucosamine (UDP-GlcNAc). The C-terminal domain catalyzes the transfer of acetyl group from acetyl coenzyme A to glucosamine-1-phosphate (GlcN-1-P) to produce N-acetylglucosamine-1-phosphate (GlcNAc-1-P), which is converted into UDP-GlcNAc by the transfer of uridine 5-monophosphate (from uridine 5-triphosphate), a reaction catalyzed by the N-terminal domain. In Streptococcus pneumoniae serotype 2 (strain D39 / NCTC 7466), this protein is Bifunctional protein GlmU.